Reading from the N-terminus, the 108-residue chain is Replication restart protein PriB (108 aa).

In terms of domain architecture, SSB spans 8 to 108 (IDNSFSVMGV…LHAEQIEFID (101 aa)).

This sequence belongs to the PriB family. Homodimer. Interacts with PriA and DnaT. Component of the replication restart primosome. Primosome assembly occurs via a 'hand-off' mechanism. PriA binds to replication forks, subsequently PriB then DnaT bind; DnaT then displaces ssDNA to generate the helicase loading substrate.

Involved in the restart of stalled replication forks, which reloads the replicative helicase on sites other than the origin of replication; the PriA-PriB pathway is the major replication restart pathway. During primosome assembly it facilitates complex formation between PriA and DnaT on DNA; stabilizes PriA on DNA. Stimulates the DNA unwinding activity of PriA helicase. The protein is Replication restart protein PriB of Haemophilus influenzae (strain ATCC 51907 / DSM 11121 / KW20 / Rd).